Consider the following 166-residue polypeptide: Interferon gamma (166 aa).

Residues 1-23 (MKYTSYILAFQLCIILGSSSCYS) form the signal peptide. Q24 carries the post-translational modification Pyrrolidone carboxylic acid. Residues N39, N44, and N106 are each glycosylated (N-linked (GlcNAc...) asparagine).

This sequence belongs to the type II (or gamma) interferon family. In terms of assembly, homodimer. As to expression, released primarily from activated T lymphocytes.

It localises to the secreted. In terms of biological role, produced by lymphocytes activated by specific antigens or mitogens. IFN-gamma, in addition to having antiviral activity, has important immunoregulatory functions. It is a potent activator of macrophages, it has antiproliferative effects on transformed cells and it can potentiate the antiviral and antitumor effects of the type I interferons. The sequence is that of Interferon gamma (IFNG) from Marmota monax (Woodchuck).